The sequence spans 495 residues: Probable cytosol aminopeptidase (495 aa).

Residues Lys267 and Asp272 each coordinate Mn(2+). The active site involves Lys279. Residues Asp290, Asp349, and Glu351 each contribute to the Mn(2+) site. Residue Arg353 is part of the active site.

Belongs to the peptidase M17 family. Mn(2+) is required as a cofactor.

Its subcellular location is the cytoplasm. It catalyses the reaction Release of an N-terminal amino acid, Xaa-|-Yaa-, in which Xaa is preferably Leu, but may be other amino acids including Pro although not Arg or Lys, and Yaa may be Pro. Amino acid amides and methyl esters are also readily hydrolyzed, but rates on arylamides are exceedingly low.. It carries out the reaction Release of an N-terminal amino acid, preferentially leucine, but not glutamic or aspartic acids.. Presumably involved in the processing and regular turnover of intracellular proteins. Catalyzes the removal of unsubstituted N-terminal amino acids from various peptides. In Histophilus somni (strain 129Pt) (Haemophilus somnus), this protein is Probable cytosol aminopeptidase.